A 529-amino-acid polypeptide reads, in one-letter code: Cytochrome P450 monooxygenase CLM2 (529 aa).

A helical membrane pass occupies residues 2–19; sequence LLIIVVLVGTLIYFLSFH. 2 N-linked (GlcNAc...) asparagine glycosylation sites follow: asparagine 244 and asparagine 281. Cysteine 438 is a binding site for heme.

It belongs to the cytochrome P450 family. Requires heme as cofactor.

Its subcellular location is the membrane. The catalysed reaction is (-)-longiborneol + reduced [NADPH--hemoprotein reductase] + O2 = culmorin + oxidized [NADPH--hemoprotein reductase] + H2O + H(+). Its pathway is mycotoxin biosynthesis. In terms of biological role, cytochrome P450 monooxygenase involved in the biosynthesis of culmorin, a tricyclic sesquiterpene diol reported to have antifungal activity and some phytotoxicity to wheat coleoptile tissue, contributing to Fusarium head blight disease. The terpene cyclase CLM1 is responsible for the cyclization of farnesyl diphosphate into the intermediate longiborneol. Longiborneol is then hydroxylated in a regio- and endo-stereoselective manner at position C-11 by the cytochrome P450 monooxygenase CLM2 to produce culmorin. Additional non-specific oxygenases are also able to hydroxylate longiborneol at other sites than C-11 leading to 3-hydroxylongiborneol, 5-hydroxylongiborneol, 12-hydroxylongiborneol and 15-hydroxylongiborneol. Moreover, another oxygenase capable of installing a C-11 exo-hydroxy group in longiborneol can also yield 11-epi-acetylculmorin. The production of these longiborneol derivatives is dwarfed by the high abundance of culmorin, suggesting that CLM2 displays superior enzymatic activity to the unidentified, possibly promiscuous, additional oxygenases. The protein is Cytochrome P450 monooxygenase CLM2 of Gibberella zeae (strain ATCC MYA-4620 / CBS 123657 / FGSC 9075 / NRRL 31084 / PH-1) (Wheat head blight fungus).